A 188-amino-acid polypeptide reads, in one-letter code: MATDQQDLDIISSTAELRGACDFWETRSGGVTTITITRINRDAIVLLAGVCPGESFSVSYNKEKILVNSYPFNINNVDVVGGTTDINDFNSKMKSLYLPVNGMTVLMLTEGRINNPEIAVVTEDGNLEVVGSKKKTLVKLLLLFLSLMVVIVGVWWKYFSTSELSASALFDTVGQSVKSKGNYEDLFK.

The chain crosses the membrane as a helical span at residues 136–156 (TLVKLLLLFLSLMVVIVGVWW).

The protein localises to the host membrane. This is an uncharacterized protein from Magallana gigas (Pacific oyster).